A 189-amino-acid polypeptide reads, in one-letter code: GTPase NRas (189 aa).

Residues 10–18 (GAGGVGKSA) and 29–30 (VD) contribute to the GTP site. Residues 32–40 (YDPTIEDSY) carry the Effector region motif. Residue 57 to 61 (DTAGQ) coordinates GTP. Ser89 is subject to Phosphoserine. Residue 116-119 (NKCD) coordinates GTP. The tract at residues 166 to 185 (YRMKKLNSNDDGTQGCMGLP) is hypervariable region. Residue Lys170 forms a Glycyl lysine isopeptide (Lys-Gly) (interchain with G-Cter in ubiquitin) linkage. Cys181 carries the S-palmitoyl cysteine lipid modification. The S-farnesyl cysteine moiety is linked to residue Cys186. The propeptide at 187–189 (VVM) is removed in mature form.

The protein belongs to the small GTPase superfamily. Ras family. In terms of assembly, interacts (active GTP-bound form preferentially) with RGS14. Interacts (active GTP-bound form) with RASSF7. Interacts (active GTP-bound form) with both SHOC2 and PP1c (all isoforms) to form a tertiary complex; SHOC2 and PP1c preferably bind M-Ras/MRAS, but they also bind K-Ras/KRAS, N-Ras/NRAS and H-Ras/HRAS. Post-translationally, palmitoylated by the ZDHHC9-GOLGA7 complex. Depalmitoylated by ABHD17A, ABHD17B and ABHD17C. A continuous cycle of de- and re-palmitoylation regulates rapid exchange between plasma membrane and Golgi. Acetylation at Lys-104 prevents interaction with guanine nucleotide exchange factors (GEFs). In terms of processing, ubiquitinated by the BCR(LZTR1) E3 ubiquitin ligase complex at Lys-170 in a non-degradative manner, leading to inhibit Ras signaling by decreasing Ras association with membranes. Post-translationally, phosphorylation at Ser-89 enhances NRAS association with its downstream effectors.

It localises to the cell membrane. It is found in the golgi apparatus membrane. The catalysed reaction is GTP + H2O = GDP + phosphate + H(+). Alternates between an inactive form bound to GDP and an active form bound to GTP. Activated by a guanine nucleotide-exchange factor (GEF) and inactivated by a GTPase-activating protein (GAP). In terms of biological role, ras proteins bind GDP/GTP and possess intrinsic GTPase activity. This is GTPase NRas (NRAS) from Cavia porcellus (Guinea pig).